Reading from the N-terminus, the 213-residue chain is GTP cyclohydrolase 1 (213 aa).

Zn(2+) is bound by residues Cys104, His107, and Cys175.

Belongs to the GTP cyclohydrolase I family. As to quaternary structure, toroid-shaped homodecamer, composed of two pentamers of five dimers.

The catalysed reaction is GTP + H2O = 7,8-dihydroneopterin 3'-triphosphate + formate + H(+). The protein operates within cofactor biosynthesis; 7,8-dihydroneopterin triphosphate biosynthesis; 7,8-dihydroneopterin triphosphate from GTP: step 1/1. In Brucella abortus (strain 2308), this protein is GTP cyclohydrolase 1.